A 610-amino-acid chain; its full sequence is Propanediol dehydratase-reactivating factor large subunit (610 aa).

Residue 11-13 participates in ATP binding; it reads NSS. Positions 105, 166, and 183 each coordinate Mg(2+). ATP contacts are provided by residues 459–462, 557–558, and arginine 591; these read EEIK and GS.

Belongs to the DdrA/PduG family. As to quaternary structure, forms a heterotetramer PduG(2)/PduH(2). Mg(2+) serves as cofactor.

The protein localises to the bacterial microcompartment. It carries out the reaction ATP + H2O = ADP + phosphate + H(+). Its pathway is polyol metabolism; 1,2-propanediol degradation. Its function is as follows. Large subunit of the propanediol dehydratase-reactivating factor (DDR), which reactivates suicidally inhibited adenosylcobalamin-dependent propanediol dehydratase (diol dehydratase, DDH) found in the bacterial microcompartment (BMC) dedicated to 1,2-propanediol (1,2-PD) degradation. Reactivates inactivated DDH in the presence of ATP, Mg(2+) and free adenosylcobalamin (AdoCbl), by mediating the exchange of the tightly bound damaged cofactor AdoCbl for a free intact one. This subunit contains the adenosine nucleotide binding site. In terms of biological role, expression of a cosmid containing the full 21-gene pdu operon in E.coli allows E.coli to grow on 1,2-propanediol (1,2-PD) with the appearance of bacterial microcompartments (BMC) in its cytoplasm. The 1,2-PD-specific bacterial microcompartment (BMC) concentrates low levels of 1,2-PD catabolic enzymes, concentrates volatile reaction intermediates thus enhancing pathway flux and keeps the level of toxic, mutagenic propionaldehyde low. The sequence is that of Propanediol dehydratase-reactivating factor large subunit from Citrobacter freundii.